A 3206-amino-acid polypeptide reads, in one-letter code: Highly reducing polyketide synthase ltbA (3206 aa).

The region spanning 5-434 is the Ketosynthase family 3 (KS3) domain; sequence PAPIAIIGVG…GTNCHVILEA (430 aa). Catalysis depends on for beta-ketoacyl synthase activity residues C179, H314, and H354. Positions 441–463 are enriched in polar residues; it reads PTGTNGIKTNGTRINGIKTNGAD. The disordered stretch occupies residues 441–472; it reads PTGTNGIKTNGTRINGIKTNGADTNERESMKN. The interval 575–890 is malonyl-CoA:ACP transacylase (MAT) domain; that stretch reads VFSGQGAQWH…EYLSALQRNT (316 aa). The N-terminal hotdog fold stretch occupies residues 958–1098; that stretch reads HDLLGLFDPA…GEITVEYETD (141 aa). The interval 958–1278 is dehydratase (DH) domain; the sequence is HDLLGLFDPA…LLVNLRAIGE (321 aa). The 327-residue stretch at 958-1284 folds into the PKS/mFAS DH domain; the sequence is HDLLGLFDPA…AIGETREDED (327 aa). H990 serves as the catalytic Proton acceptor; for dehydratase activity. The C-terminal hotdog fold stretch occupies residues 1128 to 1284; that stretch reads DTDMTKSEFY…AIGETREDED (157 aa). The active-site Proton donor; for dehydratase activity is D1193. Positions 1450–1640 are methyltransferase (CMet) domain; it reads ESGILVGPYE…LARNGFGGIH (191 aa). The segment at 1871–2185 is enoyl reductase (ER) domain; sequence LLSSLRFVDD…RKHTGKVVLQ (315 aa). Residues 2208-2395 are ketoreductase (KR) domain; that stretch reads GTYVAAGGLG…SVDAHGALKE (188 aa). Positions 2499 to 2577 constitute a Carrier domain; the sequence is EEAEQLIRDA…ALAATVASRS (79 aa). At S2537 the chain carries O-(pantetheine 4'-phosphoryl)serine. Residues 2584–2611 are disordered; sequence IRHSSRLQEATTQAENKDAPKNEKEGPS. A compositionally biased stretch (basic and acidic residues) spans 2598–2610; it reads ENKDAPKNEKEGP. Residues 2994–3206 form a carnitine O-acyltransferase (cAT) domain region; the sequence is HLIPSFGKAV…IKTIIQAGQE (213 aa).

Pantetheine 4'-phosphate is required as a cofactor.

It participates in secondary metabolite biosynthesis. Its function is as follows. Highly reducing polyketide synthase; part of the gene cluster that mediates the biosynthesis of luteodienoside A, a glycosylated polyketide consisting of an unusual 1-O-beta-D-glucopyranosyl-myo-inositol (glucinol) ester of 3-hydroxy-2,2,4-trimethylocta-4,6-dienoic acid. LtbA produces the trimethylated polyketide chain from acetyl-CoA, malonyl-CoA and S-adenosylmethionine (SAM). The ltbA carnitine O-acyltransferase (cAT) domain then uses glucinol produced by the glycosyltransferase ltbB as an offloading substrate to release luteodienoside A. Furthermore, the PKS C-methyltransferase (CMeT) domain is capable of catalysing gem-dimethylation of the 3-hydroxy-2,2,4-trimethylocta-4,6-dienoic acid intermediate, without requiring reversible product release and recapture by the cAT domain. Since ltbA and ltbB are sufficient for the biosynthesis of luteodienoside A, the functions of the methyltransferase ltbC and the FAD-binding monooxygenase ltbD within the pathway remain obscur. The polypeptide is Highly reducing polyketide synthase ltbA (Aspergillus luteorubrus).